Reading from the N-terminus, the 409-residue chain is Adenosine receptor A2a (409 aa).

Topologically, residues 1 to 4 are extracellular; sequence MSSS. Residues 5–29 form a helical membrane-spanning segment; the sequence is VYITVELVIAVLAILGNVLVCWAVW. At 30 to 39 the chain is on the cytoplasmic side; it reads INSNLQNVTN. The helical transmembrane segment at 40–63 threads the bilayer; it reads YFVVSLAAADIAVGVLAIPFAITI. The Extracellular segment spans residues 64 to 74; the sequence is STGFCAACHGC. Intrachain disulfides connect Cys68/Cys156, Cys71/Cys143, and Cys74/Cys163. A helical transmembrane segment spans residues 75–97; it reads LFFACFVLVLTQSSIFSLLTITI. Residues 98–117 are Cytoplasmic-facing; it reads DRYIAIRIPLRYNGLVTCTR. Residues 118–140 traverse the membrane as a helical segment; that stretch reads AKGIIAICWVLSFAIGLTPMLGW. The Extracellular portion of the chain corresponds to 141–170; sequence NNCSQPKGDKNHSESCDEGQVTCLFEDVVP. N-linked (GlcNAc...) asparagine glycans are attached at residues Asn142 and Asn151. Glu166 contacts adenosine. The chain crosses the membrane as a helical span at residues 171 to 195; the sequence is MNYMVYYNFFAFVLVPLLLMLGIYL. The Cytoplasmic segment spans residues 196 to 231; that stretch reads RIFLAARRQLKQMESQPLPGERTRSTLQKEVHPAKS. Residues 232-255 traverse the membrane as a helical segment; sequence LAIIVGLFALCCLPLNIINCFTFF. An adenosine-binding site is contributed by Asn250. Residues Cys256 and Cys259 are joined by a disulfide bond. Topologically, residues 256-263 are extracellular; sequence CPECDHAP. A helical transmembrane segment spans residues 264–287; it reads PWLMYLTIILSHGNSVVNPLIYAY. Adenosine is bound by residues Ser274 and His275. Over 288-409 the chain is Cytoplasmic; that stretch reads RIREFRQTFR…PPAHGGAGVS (122 aa). Disordered stretches follow at residues 316 to 336 and 369 to 409; these read TSAR…LRLN and QRSH…AGVS.

This sequence belongs to the G-protein coupled receptor 1 family. In terms of assembly, interacts (via cytoplasmic C-terminal domain) with USP4; the interaction is direct. May interact with DRD4. Interacts with NECAB2. Interacts (via cytoplasmic C-terminal domain) with GAS2L2; interaction enhances receptor-mediated adenylyl cyclase activity. Post-translationally, ubiquitinated. Deubiquitinated by USP4; leading to stabilization and expression at the cell surface.

The protein resides in the cell membrane. Receptor for adenosine. The activity of this receptor is mediated by G proteins which activate adenylyl cyclase. The protein is Adenosine receptor A2a (ADORA2A) of Cavia porcellus (Guinea pig).